Here is a 192-residue protein sequence, read N- to C-terminus: NADH-quinone oxidoreductase subunit C (192 aa).

The disordered stretch occupies residues 170 to 192; that stretch reads LGGIPVEYKGATVPPPDERRQYA.

It belongs to the complex I 30 kDa subunit family. As to quaternary structure, NDH-1 is composed of 14 different subunits. Subunits NuoB, C, D, E, F, and G constitute the peripheral sector of the complex.

It is found in the cell membrane. It catalyses the reaction a quinone + NADH + 5 H(+)(in) = a quinol + NAD(+) + 4 H(+)(out). NDH-1 shuttles electrons from NADH, via FMN and iron-sulfur (Fe-S) centers, to quinones in the respiratory chain. The immediate electron acceptor for the enzyme in this species is believed to be a menaquinone. Couples the redox reaction to proton translocation (for every two electrons transferred, four hydrogen ions are translocated across the cytoplasmic membrane), and thus conserves the redox energy in a proton gradient. The protein is NADH-quinone oxidoreductase subunit C of Acidothermus cellulolyticus (strain ATCC 43068 / DSM 8971 / 11B).